A 291-amino-acid chain; its full sequence is Quinol oxidase subunit 2 (291 aa).

An N-terminal signal peptide occupies residues 1-28 (MQLKKAFWKLASLLPLSLLLFLGGCDKK). Helical transmembrane passes span 49-69 (SFLL…VILI) and 91-111 (LEII…IPTV).

Belongs to the cytochrome c oxidase subunit 2 family.

Its subcellular location is the cell membrane. It catalyses the reaction 2 a quinol + O2 = 2 a quinone + 2 H2O. Functionally, catalyzes quinol oxidation with the concomitant reduction of oxygen to water. Subunit II transfers the electrons from a quinol to the binuclear center of the catalytic subunit I. This Bacillus anthracis protein is Quinol oxidase subunit 2.